A 183-amino-acid chain; its full sequence is MNIIAGFQNNFSEGLYSKFKSYRYKVFVEHLGWELNCPHNEELDQFDKVDTAYVVAQDRDSNIIGCARLLPTTQPYLLGEIFPQLLNGIPLPCSPEIWELSRFSAVDFSNPPTTASQAVSSPVSIAILQEAINFARAQGAKQLITTSPLGVERLLRAAGFRAHRAGPPMTIDGYSMFACLIDV.

Belongs to the autoinducer synthase family.

It carries out the reaction a fatty acyl-[ACP] + S-adenosyl-L-methionine = an N-acyl-L-homoserine lactone + S-methyl-5'-thioadenosine + holo-[ACP] + H(+). Its function is as follows. Involved in the synthesis of the acyl-homoserine lactone (AHL) signal N-(3-hydroxydodecanoyl)-L-HSL (3-hydroxy-C(12)-HSL or OH-dDHL). Probably part of a quorum-sensing system with AnoR. In Acinetobacter nosocomialis, this protein is Acyl-homoserine-lactone synthase.